A 369-amino-acid polypeptide reads, in one-letter code: Aminomethyltransferase (369 aa).

Belongs to the GcvT family. In terms of assembly, the glycine cleavage system is composed of four proteins: P, T, L and H.

It catalyses the reaction N(6)-[(R)-S(8)-aminomethyldihydrolipoyl]-L-lysyl-[protein] + (6S)-5,6,7,8-tetrahydrofolate = N(6)-[(R)-dihydrolipoyl]-L-lysyl-[protein] + (6R)-5,10-methylene-5,6,7,8-tetrahydrofolate + NH4(+). In terms of biological role, the glycine cleavage system catalyzes the degradation of glycine. In Xanthomonas euvesicatoria pv. vesicatoria (strain 85-10) (Xanthomonas campestris pv. vesicatoria), this protein is Aminomethyltransferase.